Consider the following 1441-residue polypeptide: Cleavage and polyadenylation specificity factor subunit 1 (1441 aa).

Disordered stretches follow at residues 404-435 (PASS…GGKT), 545-569 (EEET…DGRR), 713-775 (GGAR…PAPF), and 899-921 (FREK…EGSG). Positions 410–419 (EAADKEEPPS) are enriched in basic and acidic residues. S754 and S764 each carry phosphoserine. Basic and acidic residues predominate over residues 756–773 (SKEEARRSSQPPADRDPA).

The protein belongs to the CPSF1 family. Component of the cleavage and polyadenylation specificity factor (CPSF) complex, composed of CPSF1, CPSF2, CPSF3, CPSF4 and FIP1L1. Found in a complex with CPSF1, FIP1L1 and PAPOLA. Interacts with FIP1L1 and SRRM1. Interacts with TUT1; the interaction is direct and mediates the recruitment of the CPSF complex on the 3'UTR of selected pre-mRNAs. Interacts with TENT2/GLD2.

Its subcellular location is the nucleus. The protein resides in the nucleoplasm. Its function is as follows. Component of the cleavage and polyadenylation specificity factor (CPSF) complex that plays a key role in pre-mRNA 3'-end formation, recognizing the AAUAAA signal sequence and interacting with poly(A) polymerase and other factors to bring about cleavage and poly(A) addition. This subunit is involved in the RNA recognition step of the polyadenylation reaction. May play a role in eye morphogenesis and the development of retinal ganglion cell projections to the midbrain. The chain is Cleavage and polyadenylation specificity factor subunit 1 (Cpsf1) from Mus musculus (Mouse).